A 259-amino-acid polypeptide reads, in one-letter code: Phosphatidylglycerol--prolipoprotein diacylglyceryl transferase (259 aa).

The next 4 membrane-spanning stretches (helical) occupy residues 12–32, 46–66, 83–103, and 109–129; these read LSLH…VYLA, IIDF…IYYV, IWNG…VLFV, and VLNP…AQAI. An a 1,2-diacyl-sn-glycero-3-phospho-(1'-sn-glycerol)-binding site is contributed by arginine 131. The next 3 helical transmembrane spans lie at 167-187, 194-214, and 226-246; these read VPTF…IMVW, LLDG…RLVI, and GIRV…VFIF.

The protein belongs to the Lgt family.

It localises to the cell membrane. It carries out the reaction L-cysteinyl-[prolipoprotein] + a 1,2-diacyl-sn-glycero-3-phospho-(1'-sn-glycerol) = an S-1,2-diacyl-sn-glyceryl-L-cysteinyl-[prolipoprotein] + sn-glycerol 1-phosphate + H(+). It participates in protein modification; lipoprotein biosynthesis (diacylglyceryl transfer). In terms of biological role, catalyzes the transfer of the diacylglyceryl group from phosphatidylglycerol to the sulfhydryl group of the N-terminal cysteine of a prolipoprotein, the first step in the formation of mature lipoproteins. The chain is Phosphatidylglycerol--prolipoprotein diacylglyceryl transferase from Streptococcus equi subsp. zooepidemicus (strain H70).